Reading from the N-terminus, the 879-residue chain is mRNA-binding protein PUF3 (879 aa).

Thr-83 carries the post-translational modification Phosphothreonine. Ser-207 and Ser-210 each carry phosphoserine. Disordered regions lie at residues 222-256 (ESDKNFNKLNRNTTNSGSLYHSSSNSGSSASLESE), 344-417 (PANE…QQQQ), and 443-512 (KKRN…QQTY). Over residues 237 to 255 (SGSLYHSSSNSGSSASLES) the composition is skewed to low complexity. The span at 370–395 (SSPPNNSPFPFAYPNPMMFMPPPPLS) shows a compositional bias: pro residues. Low complexity-rich tracts occupy residues 398-417 (QQQQQQQQQQQQEDQQQQQQ), 449-463 (NHPANNSNNANKQAN), 472-491 (TKNTSKKNASSKSNESTANN), and 501-512 (HSQSLQQQQQTY). In terms of domain architecture, PUM-HD spans 513–871 (HRSPLLEQLR…RHLASVEKLA (359 aa)). 8 Pumilio repeats span residues 538–573 (DIFGHSLEFCKDQHGSRFIQRELATSPASEKEVIFN), 574–609 (EIRDDAIELSNDVFGNYVIQKFFEFGSKIQKNTLVD), 610–645 (QFKGNMKQLSLQMYACRVIQKALEYIDSNQRIELVL), 646–681 (ELSDSVLQMIKDQNGNHVIQKAIETIPIEKLPFILS), 682–717 (SLTGHIYHLSTHSYGCRVIQRLLEFGSSEDQESILN), 718–759 (ELKD…EIIE), 760–795 (TVANNVVEYSKHKFASNVVEKSILYGSKNQKDLIIS), and 807–844 (NLEDDSPMILMIKDQFANYVIQKLVNVSEGEGKKLIVI).

The protein belongs to the PUF3 family.

Its subcellular location is the mitochondrion outer membrane. It is found in the cytoplasm. Functionally, RNA-binding protein involved in post-transcriptional regulation. Negatively regulates expression of COX17 by binding to the 3'-UTR of COX17 mRNA. Promotes decay of COX17 mRNA by enhancing its rate of deadenylation and subsequent turnover. Predominantly binds to mRNAs encoding mitochondrial proteins and localizes them to the vicinity of mitochondria for translation. Regulates mitochondrial biogenesis, motility and morphology. The sequence is that of mRNA-binding protein PUF3 (PUF3) from Saccharomyces cerevisiae (strain ATCC 204508 / S288c) (Baker's yeast).